The chain runs to 418 residues: MSGLLKKKQRFSCNDILKIVSKYGTPLWVYDSNIIVKKIKELSQFDVIRFAQKSCSNIHILNLFYKYNVKIDAVSLGEIERALISKYRFTMDQDVVFTSDIIERETLNKVVQYKIPINIGSIDMLEQVGKISPGHNIWLRINPKFGHGHSKKTNTGGENSKHGIWDINLAFPYITKYNFKLIGLHMHIGSGVDYCHLKRVCKAMIDQVLQCKFKIHVISAGGGLTVPYHCNDEPVNVKNYFFLWNKARKIISNYLNRPIRLEIEPGRFLVAESGILVSEIRVIKKTNNRTFILVDSGFNDLIRPAMYGSYHHISVIPRDGRCVNYDDTIEAVVCGPLCESGDVFTQNEYGDIKTRILPNVQIGDFLVFHDTGAYGASMSSNYNSRPLIPEILFKDNEFHIIRRRQTMKELLELEINCI.

Lysine 53 is modified (N6-(pyridoxal phosphate)lysine). Residues glycine 223 and glutamate 264–arginine 267 contribute to the pyridoxal 5'-phosphate site. Positions 267, 303, and 307 each coordinate substrate. Catalysis depends on cysteine 338, which acts as the Proton donor. Glutamate 339 and tyrosine 374 together coordinate substrate. Tyrosine 374 lines the pyridoxal 5'-phosphate pocket.

Belongs to the Orn/Lys/Arg decarboxylase class-II family. LysA subfamily. Homodimer. Requires pyridoxal 5'-phosphate as cofactor.

The enzyme catalyses meso-2,6-diaminopimelate + H(+) = L-lysine + CO2. Its pathway is amino-acid biosynthesis; L-lysine biosynthesis via DAP pathway; L-lysine from DL-2,6-diaminopimelate: step 1/1. In terms of biological role, specifically catalyzes the decarboxylation of meso-diaminopimelate (meso-DAP) to L-lysine. The sequence is that of Diaminopimelate decarboxylase from Buchnera aphidicola subsp. Baizongia pistaciae (strain Bp).